Consider the following 177-residue polypeptide: Anti-apoptotic protein NR13 (177 aa).

The BH1 signature appears at 75–94 (LETDGGLNWGRLLALVVFAG). A helical transmembrane segment spans residues 86–106 (LLALVVFAGTLAAALAESACE). The BH2 signature appears at 126–141 (EWMEEHGGWDGFCRFF). A helical membrane pass occupies residues 156 to 176 (SNAIMAAAGFGIAGLAFLLVV).

The protein belongs to the Bcl-2 family. In terms of assembly, interacts with BAX. As to expression, mainly expressed in neural and muscular tissues.

It is found in the cell membrane. Its function is as follows. Shows anti-apoptotic properties. Counteract the pro-apoptotic activity of BAX. In Coturnix japonica (Japanese quail), this protein is Anti-apoptotic protein NR13 (NR13).